The primary structure comprises 358 residues: UPF0725 protein At4g29550 (358 aa).

The tract at residues 31–82 (LNKHPPSGSGWTDEDDDNDDVFSSSFISKEELSDAVHNDPPSGWTDEDDDDQ) is disordered. Basic and acidic residues predominate over residues 58-67 (SKEELSDAVH).

This sequence belongs to the UPF0725 (EMB2204) family.

This Arabidopsis thaliana (Mouse-ear cress) protein is UPF0725 protein At4g29550.